A 354-amino-acid polypeptide reads, in one-letter code: uncharacterized protein (354 aa).

This sequence belongs to the asfivirus B354L family.

This is an uncharacterized protein from Ornithodoros (relapsing fever ticks).